A 215-amino-acid chain; its full sequence is 3-isopropylmalate dehydratase small subunit (215 aa).

The protein belongs to the LeuD family. LeuD type 1 subfamily. As to quaternary structure, heterodimer of LeuC and LeuD.

It carries out the reaction (2R,3S)-3-isopropylmalate = (2S)-2-isopropylmalate. The protein operates within amino-acid biosynthesis; L-leucine biosynthesis; L-leucine from 3-methyl-2-oxobutanoate: step 2/4. Catalyzes the isomerization between 2-isopropylmalate and 3-isopropylmalate, via the formation of 2-isopropylmaleate. The chain is 3-isopropylmalate dehydratase small subunit from Ectopseudomonas mendocina (strain ymp) (Pseudomonas mendocina).